The following is a 631-amino-acid chain: Chaperone protein HtpG (631 aa).

The segment at Met1 to Arg339 is a; substrate-binding. Residues Glu340–Lys555 are b. The segment at Leu556–His631 is c.

This sequence belongs to the heat shock protein 90 family. In terms of assembly, homodimer.

Its subcellular location is the cytoplasm. In terms of biological role, molecular chaperone. Has ATPase activity. This chain is Chaperone protein HtpG, found in Pasteurella multocida (strain Pm70).